The sequence spans 151 residues: Ocs element-binding factor 1 (151 aa).

Over residues 1–17 (MSSSSLSPTAGRTSGSD) the composition is skewed to polar residues. The segment at 1-47 (MSSSSLSPTAGRTSGSDGDSAADTHRREKRRLSNRESARRSRLRKQQ) is disordered. The span at 22–39 (ADTHRREKRRLSNRESAR) shows a compositional bias: basic and acidic residues. Residues 24–87 (THRREKRRLS…TRVEQENTVL (64 aa)) form the bZIP domain. The interval 26–45 (RREKRRLSNRESARRSRLRK) is basic motif. The interval 52–59 (LVQEVARL) is leucine-zipper.

The protein belongs to the bZIP family. As to expression, roots and shoots of young plants, and basal portion of leaves.

It is found in the nucleus. May contribute to developmentally specific patterns of gene expression. Binds specifically to ocs elements which are transcriptional enhancer found in the promoters of several plant genes. OCSBF-1 is able to bind to a site within each half of the ocs element as well as to animal AP-1 and CREB sites. In Zea mays (Maize), this protein is Ocs element-binding factor 1 (OBF1).